A 232-amino-acid chain; its full sequence is Ubiquinone biosynthesis O-methyltransferase (232 aa).

S-adenosyl-L-methionine contacts are provided by arginine 36, glycine 55, aspartate 76, and methionine 120.

The protein belongs to the methyltransferase superfamily. UbiG/COQ3 family.

It catalyses the reaction a 3-demethylubiquinol + S-adenosyl-L-methionine = a ubiquinol + S-adenosyl-L-homocysteine + H(+). The catalysed reaction is a 3-(all-trans-polyprenyl)benzene-1,2-diol + S-adenosyl-L-methionine = a 2-methoxy-6-(all-trans-polyprenyl)phenol + S-adenosyl-L-homocysteine + H(+). It participates in cofactor biosynthesis; ubiquinone biosynthesis. Its function is as follows. O-methyltransferase that catalyzes the 2 O-methylation steps in the ubiquinone biosynthetic pathway. This Chromobacterium violaceum (strain ATCC 12472 / DSM 30191 / JCM 1249 / CCUG 213 / NBRC 12614 / NCIMB 9131 / NCTC 9757 / MK) protein is Ubiquinone biosynthesis O-methyltransferase.